The following is a 450-amino-acid chain: Bestrophin homolog 1 (450 aa).

Residues 1–31 (MTINYHKEIMTSHPWTFFLLLFKWKGSIWKA) are Cytoplasmic-facing. The helical transmembrane segment at 32–51 (VYMETIIFLICYGIISVIYK) threads the bilayer. Residues 52 to 60 (TAMGESSQR) are Extracellular-facing. Residues 61-82 (TFESLVRYFDKRLSYIPLEFVL) form a helical membrane-spanning segment. The Cytoplasmic portion of the chain corresponds to 83–242 (GFFVTTVVNR…DWVPLPLMYP (160 aa)). A helical membrane pass occupies residues 243–260 (QLVCLAVNLYFLVSIIAR). Residues 261–278 (QLVIEKHKMVDEVDVYFP) are Extracellular-facing. The chain crosses the membrane as a helical span at residues 279–292 (VMTFLQFIFYMGWL). Over 293-450 (KVIDVMLNPF…WKIPTNPQKF (158 aa)) the chain is Cytoplasmic. Ca(2+) is bound by residues N300, D305, and D308.

Belongs to the anion channel-forming bestrophin (TC 1.A.46) family. Calcium-sensitive chloride channel subfamily. Forms oligomers.

The protein localises to the cell membrane. The enzyme catalyses chloride(in) = chloride(out). In terms of biological role, ligand-gated anion channel that allows the movement of chloride monoatomic anions across cell membranes when activated by Calcium (Ca2+). This chain is Bestrophin homolog 1 (best-1), found in Caenorhabditis elegans.